We begin with the raw amino-acid sequence, 110 residues long: Large ribosomal subunit protein uL22 (110 aa).

The protein belongs to the universal ribosomal protein uL22 family. Part of the 50S ribosomal subunit.

Its function is as follows. This protein binds specifically to 23S rRNA; its binding is stimulated by other ribosomal proteins, e.g. L4, L17, and L20. It is important during the early stages of 50S assembly. It makes multiple contacts with different domains of the 23S rRNA in the assembled 50S subunit and ribosome. Functionally, the globular domain of the protein is located near the polypeptide exit tunnel on the outside of the subunit, while an extended beta-hairpin is found that lines the wall of the exit tunnel in the center of the 70S ribosome. This chain is Large ribosomal subunit protein uL22, found in Haemophilus ducreyi (strain 35000HP / ATCC 700724).